We begin with the raw amino-acid sequence, 2365 residues long: Voltage-dependent T-type calcium channel subunit alpha-1H (2365 aa).

The segment at 1–63 (MTEGTLAADE…PGTECGADLG (63 aa)) is disordered. At 1-100 (MTEGTLAADE…SWCLRLVSRR (100 aa)) the chain is on the cytoplasmic side. Positions 16 to 36 (GASPSAPAAPVRASPASPGVP) are enriched in low complexity. One copy of the I repeat lies at 87–422 (TRPRSWCLRL…LCLVVIATQF (336 aa)). A helical membrane pass occupies residues 101–119 (WFEHISMLVIMLNCVTLGM). The Extracellular portion of the chain corresponds to 120 to 141 (FRPCEDVECRSERCSILEAFDD). Residue Asp-140 participates in Zn(2+) binding. A helical transmembrane segment spans residues 142-160 (FIFAFFAVEMVIKMVALGL). The Cytoplasmic portion of the chain corresponds to 161–169 (FGQKCYLGD). The helical transmembrane segment at 170 to 184 (TWNRLDFFIVMAGMM) threads the bilayer. Topologically, residues 185-193 (EYSLDGHNV) are extracellular. The Zn(2+) site is built by Asp-189 and His-191. An N-linked (GlcNAc...) asparagine glycan is attached at Asn-192. The chain crosses the membrane as a helical span at residues 194-212 (SLSAIRTVRVLRPLRAINR). At 213–232 (VPSMRILVTLLLDTLPMLGN) the chain is on the cytoplasmic side. The helical transmembrane segment at 233–253 (VLLLCFFVFFIFGIVGVQLWA) threads the bilayer. The Extracellular portion of the chain corresponds to 254 to 394 (GLLRNRCFLD…YYVMDAHSFY (141 aa)). Asn-271 is a glycosylation site (N-linked (GlcNAc...) asparagine). A helical transmembrane segment spans residues 395–419 (NFIYFILLIIVGSFFMINLCLVVIA). At 420–790 (TQFSETKQRE…SKLRRIVDSK (371 aa)) the chain is on the cytoplasmic side. Disordered regions lie at residues 490 to 573 (VDPS…SESV), 618 to 656 (PSGA…SPSP), and 737 to 761 (GDCR…RWRP). Positions 500–532 (GPRRRPRRAGRRTASVHHLVYHHHHHHHHHYHF) are enriched in basic residues. Positions 557 to 566 (PPSPPSPGHG) are enriched in pro residues. The span at 621-631 (AVNSKGSTSSR) shows a compositional bias: polar residues. One copy of the II repeat lies at 776 to 1015 (WASFSSKLRR…LLVAILVEGF (240 aa)). A helical transmembrane segment spans residues 791-811 (YFNRGIMAAILVNTLSMGVEY). Topologically, residues 812–824 (HEQPDELTNALEI) are extracellular. Residues 825 to 846 (SNIVFTSMFALEMLLKLLACGP) traverse the membrane as a helical segment. The Cytoplasmic portion of the chain corresponds to 847 to 852 (LGYIRN). A helical transmembrane segment spans residues 853 to 871 (PYNIFDGIVVIISVWEIVG). Residues 872–879 (QADGGLSV) are Extracellular-facing. Residues 880–903 (LRTFRLLRVLKLVRFLPALRRQLV) form a helical membrane-spanning segment. The Cytoplasmic segment spans residues 904–914 (VLMRTMDNVAT). Residues 915 to 935 (FCMLLMLFIFIFSILGMHLFG) traverse the membrane as a helical segment. Residues 936–987 (CKFSLKTDSGDTVPDRKNFDSLLWAIVTVFQILTQEDWNVVLYNGMASTSSW) lie on the Extracellular side of the membrane. A helical transmembrane segment spans residues 988–1012 (AALYFVALMTFGNYVLFNLLVAILV). The Cytoplasmic portion of the chain corresponds to 1013-1301 (EGFQAEGDAT…NRLRVSCQKV (289 aa)). Residues 1059–1215 (PNGHLEGRGS…HRSTMDLCPP (157 aa)) form a disordered region. Low complexity predominate over residues 1130-1147 (GPNSAGSSRRSSWNSLGR). Residues 1199–1209 (RRAESLGHRST) show a composition bias toward basic and acidic residues. One copy of the III repeat lies at 1292–1569 (NRLRVSCQKV…MFVGVVVENF (278 aa)). A helical transmembrane segment spans residues 1302–1324 (IAHKMFDHVVLVFIFLNCITIAL). The Extracellular segment spans residues 1325–1342 (ERPDIDPGSTERAFLSVS). The helical transmembrane segment at 1343-1363 (NYIFTAIFVVEMMVKVVALGL) threads the bilayer. Residues 1364 to 1373 (LWGEHAYLQS) are Cytoplasmic-facing. The helical transmembrane segment at 1374 to 1393 (SWNVLDGLLVLVSLVDIIVA) threads the bilayer. Topologically, residues 1394-1407 (VASAGGAKILGVLR) are extracellular. The helical transmembrane segment at 1408 to 1429 (VLRLLRTLRPLRVISRAPGLKL) threads the bilayer. The Cytoplasmic segment spans residues 1430–1439 (VVETLISSLR). A helical transmembrane segment spans residues 1440-1463 (PIGNIVLICCAFFIIFGILGVQLF). The Extracellular portion of the chain corresponds to 1464–1540 (KGKFYYCEGT…DQQPVQNHNP (77 aa)). N-linked (GlcNAc...) asparagine glycosylation occurs at Asn-1477. The helical transmembrane segment at 1541–1566 (WMLLYFISFLLIVSFFVLNMFVGVVV) threads the bilayer. The Cytoplasmic portion of the chain corresponds to 1567–1627 (ENFHKCRQHQ…RRSIHSLCTS (61 aa)). The IV repeat unit spans residues 1613–1874 (DYSHTRRSIH…VVVAVLMKHL (262 aa)). Residues 1628–1648 (HYLDLFITFIICLNVITMSME) form a helical membrane-spanning segment. Residues 1649–1662 (HYNQPKSLDEALKY) lie on the Extracellular side of the membrane. Residues 1663-1684 (CNYVFTIVFVFEAALKLVAFGF) traverse the membrane as a helical segment. Residues 1685-1691 (RRFFKDR) are Cytoplasmic-facing. Residues 1692–1710 (WNQLDLAIVLLSIMGIALE) form a helical membrane-spanning segment. The Extracellular portion of the chain corresponds to 1711-1724 (EIEMNAALPINPTI). The helical transmembrane segment at 1725–1748 (IRIMRVLRIARVLKLLKMATGMRA) threads the bilayer. Residues 1749 to 1762 (LLDTVVQALPQVGN) are Cytoplasmic-facing. A helical transmembrane segment spans residues 1763–1783 (LGLLFMLLFFIYAALGVELFG). At 1784-1846 (RLECSEDNPC…KHCLSYLPAL (63 aa)) the chain is on the extracellular side. Residues 1847 to 1874 (SPVYFVTFVLVAQFVLVNVVVAVLMKHL) traverse the membrane as a helical segment. Topologically, residues 1875–2365 (EESNKEARED…APDDSGDEPV (491 aa)) are cytoplasmic. 2 stretches are compositionally biased toward polar residues: residues 1897–1916 (QGST…TEPD) and 1967–1983 (VTSA…SFQV). Disordered regions lie at residues 1897–1920 (QGST…TPNL), 1967–1999 (VTSA…PLCA), 2053–2264 (APLG…GERW), and 2321–2365 (ELSM…DEPV). The segment covering 2092–2102 (DDAEAADPADE) has biased composition (acidic residues). Residues 2172–2187 (GDGHLESGEVRARASE) are compositionally biased toward basic and acidic residues.

Belongs to the calcium channel alpha-1 subunit (TC 1.A.1.11) family. CACNA1H subfamily. As to quaternary structure, interacts (via N-terminal cytoplasmic domain) with STAC. In terms of processing, in response to raising of intracellular calcium, the T-type channels are activated by CaM-kinase II. Is highly expressed in lumbosacral and thoracolumbar dorsal root ganglion neurons.

It localises to the cell membrane. The enzyme catalyses Ca(2+)(in) = Ca(2+)(out). Voltage-sensitive calcium channel that gives rise to T-type calcium currents. T-type calcium channels belong to the 'low-voltage activated (LVA)' group. A particularity of this type of channel is an opening at quite negative potentials, and a voltage-dependent inactivation. T-type channels serve pacemaking functions in both central neurons and cardiac nodal cells and support calcium signaling in secretory cells and vascular smooth muscle. They may also be involved in the modulation of firing patterns of neurons. In the adrenal zona glomerulosa, participates in the signaling pathway leading to aldosterone production in response to either AGT/angiotensin II, or hyperkalemia. This chain is Voltage-dependent T-type calcium channel subunit alpha-1H (Cacna1h), found in Mus musculus (Mouse).